The sequence spans 89 residues: Acylphosphatase (89 aa).

In terms of domain architecture, Acylphosphatase-like spans 3–89 (RKEFLVSGRV…DTREKRFSTY (87 aa)). Active-site residues include R18 and N36.

The protein belongs to the acylphosphatase family.

The enzyme catalyses an acyl phosphate + H2O = a carboxylate + phosphate + H(+). The polypeptide is Acylphosphatase (acyP) (Clostridium perfringens (strain ATCC 13124 / DSM 756 / JCM 1290 / NCIMB 6125 / NCTC 8237 / Type A)).